A 229-amino-acid polypeptide reads, in one-letter code: ADP-ribosylation factor-like protein 6-interacting protein 4 (229 aa).

Basic residues predominate over residues 1–20 (MAHVGSRKRSRSRSRSRSGR). Positions 1–152 (MAHVGSRKRS…EDNDGPVLTD (152 aa)) are disordered. Over residues 21–35 (RGSEKRSKRSSKDAS) the composition is skewed to basic and acidic residues. The span at 66–87 (SRSSSTSSSSSSSSSASSSSSS) shows a compositional bias: low complexity. A compositionally biased stretch (basic residues) spans 90–117 (RKKRAKHKEKKRKKKKKKRKKKLKKRVK). Phosphoserine is present on residues serine 140 and serine 174. A Glycyl lysine isopeptide (Lys-Gly) (interchain with G-Cter in SUMO2) cross-link involves residue lysine 191.

Belongs to the ARL6IP4 family. Interacts with ZCCHC17. Interacts with SRSF2. Interacts with ARL6. As to expression, widely expressed. Expressed at high level in testis and thymus.

The protein resides in the nucleus. The protein localises to the nucleolus. It is found in the nucleus speckle. Functionally, involved in modulating alternative pre-mRNA splicing with either 5' distal site activation or preferential use of 3' proximal site. The protein is ADP-ribosylation factor-like protein 6-interacting protein 4 (Arl6ip4) of Mus musculus (Mouse).